The sequence spans 184 residues: Putative NAD(P)H nitroreductase HI_1542 (184 aa).

Residues 10–12 (RKS), R35, and H39 each bind FMN. Position 122–127 (122–127 (AAQAQG)) interacts with NAD(+). 132 to 134 (WIS) contacts FMN.

Belongs to the nitroreductase family. As to quaternary structure, homodimer. FMN serves as cofactor.

The polypeptide is Putative NAD(P)H nitroreductase HI_1542 (Haemophilus influenzae (strain ATCC 51907 / DSM 11121 / KW20 / Rd)).